We begin with the raw amino-acid sequence, 92 residues long: Large ribosomal subunit protein bL25 (92 aa).

Belongs to the bacterial ribosomal protein bL25 family. Part of the 50S ribosomal subunit; part of the 5S rRNA/L5/L18/L25 subcomplex. Contacts the 5S rRNA. Binds to the 5S rRNA independently of L5 and L18.

Functionally, this is one of the proteins that binds to the 5S RNA in the ribosome where it forms part of the central protuberance. This Vibrio atlanticus (strain LGP32) (Vibrio splendidus (strain Mel32)) protein is Large ribosomal subunit protein bL25.